Reading from the N-terminus, the 298-residue chain is Mitochondrial basic amino acids transporter (298 aa).

6 helical membrane passes run 2 to 22, 61 to 81, 96 to 116, 153 to 172, 187 to 207, and 255 to 275; these read ALDFLAGCAGGVAGVLVGHPF, GLGSPLLGLTFINALVFGVQG, FLAGAAAGAIQCVICCPMELA, GMVSTLLRETPSFGVYFLTY, LLVPKLLLAGGTSGIASWLST, and LLRAFPVNAATFATVTVVLSY. Solcar repeat units lie at residues 2 to 86, 90 to 178, and 185 to 275; these read ALDF…TLRA, DSPL…LTRA, and DRLL…VLSY.

It belongs to the mitochondrial carrier (TC 2.A.29) family.

The protein resides in the mitochondrion inner membrane. It catalyses the reaction L-lysine(out) + L-arginine(in) = L-lysine(in) + L-arginine(out). The catalysed reaction is L-histidine(out) + L-arginine(in) = L-histidine(in) + L-arginine(out). The enzyme catalyses L-ornithine(in) + L-arginine(out) = L-ornithine(out) + L-arginine(in). It carries out the reaction L-homoarginine(in) + L-arginine(out) = L-homoarginine(out) + L-arginine(in). It catalyses the reaction N(omega)-methyl-L-arginine(in) + L-arginine(out) = N(omega)-methyl-L-arginine(out) + L-arginine(in). The catalysed reaction is L-arginine(in) = L-arginine(out). The enzyme catalyses L-lysine(in) = L-lysine(out). It carries out the reaction L-ornithine(in) = L-ornithine(out). It catalyses the reaction L-histidine(out) = L-histidine(in). In terms of biological role, mitochondrial transporter of arginine, lysine, homoarginine, methylarginine and, to a much lesser extent, ornithine and histidine. Does not transport carnitine nor acylcarnitines. Functions by both counter-exchange and uniport mechanisms. Plays a physiological role in the import of basic amino acids into mitochondria for mitochondrial protein synthesis and amino acid degradation. The protein is Mitochondrial basic amino acids transporter (SLC25A29) of Bos taurus (Bovine).